Consider the following 275-residue polypeptide: MAVIKCKPTSPGRRHLVKVVNSDLHKGKPFAGLLAKKSKSGGRNNTGRITVRHIGGGHKQHYRLIDFKRNKDGIPAKVERLEYDPNRTANIALVLYADGERRYILAAKGMQAGDKIQSGIDAEIKSGNAMPLRNIPVGSVVHAVEMKPGKGAQIARSAGAYVQVIARDGAYATLRLRSGEMRKVPVDCRATLGEVGNAEHMLRQLGKAGAKRWRGVRPTVRGVAMNPVDHPHGGGEGRTSGGRHPVSPWGQPTKGYKTRSNKRTDKYIVRRRNKK.

Residues Val223–Lys275 are disordered.

Belongs to the universal ribosomal protein uL2 family. Part of the 50S ribosomal subunit. Forms a bridge to the 30S subunit in the 70S ribosome.

Its function is as follows. One of the primary rRNA binding proteins. Required for association of the 30S and 50S subunits to form the 70S ribosome, for tRNA binding and peptide bond formation. It has been suggested to have peptidyltransferase activity; this is somewhat controversial. Makes several contacts with the 16S rRNA in the 70S ribosome. The polypeptide is Large ribosomal subunit protein uL2 (Shewanella halifaxensis (strain HAW-EB4)).